We begin with the raw amino-acid sequence, 70 residues long: DNA-directed RNA polymerase subunit epsilon (70 aa).

This sequence belongs to the RNA polymerase subunit epsilon family. In terms of assembly, RNAP is composed of a core of 2 alpha, a beta and a beta' subunit. The core is associated with a delta subunit, and at least one of epsilon or omega. When a sigma factor is associated with the core the holoenzyme is formed, which can initiate transcription.

It catalyses the reaction RNA(n) + a ribonucleoside 5'-triphosphate = RNA(n+1) + diphosphate. A non-essential component of RNA polymerase (RNAP). This chain is DNA-directed RNA polymerase subunit epsilon, found in Latilactobacillus sakei subsp. sakei (strain 23K) (Lactobacillus sakei subsp. sakei).